We begin with the raw amino-acid sequence, 788 residues long: Endonuclease MutS2 (788 aa).

332–339 (GPNTGGKT) is an ATP binding site. Residues 713–788 (IDLRGLDSEE…GTGVTVVELK (76 aa)) form the Smr domain.

This sequence belongs to the DNA mismatch repair MutS family. MutS2 subfamily. Homodimer. Binds to stalled ribosomes, contacting rRNA.

Endonuclease that is involved in the suppression of homologous recombination and thus may have a key role in the control of bacterial genetic diversity. Functionally, acts as a ribosome collision sensor, splitting the ribosome into its 2 subunits. Detects stalled/collided 70S ribosomes which it binds and splits by an ATP-hydrolysis driven conformational change. Acts upstream of the ribosome quality control system (RQC), a ribosome-associated complex that mediates the extraction of incompletely synthesized nascent chains from stalled ribosomes and their subsequent degradation. Probably generates substrates for RQC. This is Endonuclease MutS2 from Clostridium acetobutylicum (strain ATCC 824 / DSM 792 / JCM 1419 / IAM 19013 / LMG 5710 / NBRC 13948 / NRRL B-527 / VKM B-1787 / 2291 / W).